Here is a 425-residue protein sequence, read N- to C-terminus: D-amino acid dehydrogenase (425 aa).

3-17 (VLVMGAGVIGVTTAY) is an FAD binding site.

It belongs to the DadA oxidoreductase family. FAD serves as cofactor.

The enzyme catalyses a D-alpha-amino acid + A + H2O = a 2-oxocarboxylate + AH2 + NH4(+). It participates in amino-acid degradation; D-alanine degradation; NH(3) and pyruvate from D-alanine: step 1/1. In terms of biological role, oxidative deamination of D-amino acids. The sequence is that of D-amino acid dehydrogenase from Rhodopseudomonas palustris (strain HaA2).